The sequence spans 274 residues: Large ribosomal subunit protein uL2c (274 aa).

The disordered stretch occupies residues 224 to 274; the sequence is NPVDHPHGGGEGRAPIGRKKPTTPWGYPALGRKSRKRNKYSEKFILRHRSK.

The protein belongs to the universal ribosomal protein uL2 family. As to quaternary structure, part of the 50S ribosomal subunit.

The protein resides in the plastid. It is found in the chloroplast. The protein is Large ribosomal subunit protein uL2c (rpl2) of Ipomoea purpurea (Common morning glory).